Here is a 712-residue protein sequence, read N- to C-terminus: Polyribonucleotide nucleotidyltransferase (712 aa).

Positions 493 and 499 each coordinate Mg(2+). The region spanning 560-622 (PRLTKLTIDP…RDAEAAIERI (63 aa)) is the KH domain. Positions 632–700 (GEDYVGTVKG…DDGKMRLTRK (69 aa)) constitute an S1 motif domain.

The protein belongs to the polyribonucleotide nucleotidyltransferase family. Mg(2+) is required as a cofactor.

The protein resides in the cytoplasm. It carries out the reaction RNA(n+1) + phosphate = RNA(n) + a ribonucleoside 5'-diphosphate. Its function is as follows. Involved in mRNA degradation. Catalyzes the phosphorolysis of single-stranded polyribonucleotides processively in the 3'- to 5'-direction. This is Polyribonucleotide nucleotidyltransferase from Salinibacter ruber (strain DSM 13855 / M31).